The sequence spans 837 residues: Protein translocase subunit SecA 1 (837 aa).

Residues glutamine 85, glycine 103–threonine 107, and aspartate 492 contribute to the ATP site. Over residues glutamine 787–arginine 806 the composition is skewed to basic and acidic residues. The tract at residues glutamine 787–lysine 811 is disordered. The Zn(2+) site is built by cysteine 821, cysteine 823, cysteine 832, and cysteine 833.

It belongs to the SecA family. As to quaternary structure, monomer and homodimer. Part of the essential Sec protein translocation apparatus which comprises SecA, SecYEG and auxiliary proteins SecDF. Other proteins may also be involved. Zn(2+) serves as cofactor.

Its subcellular location is the cell membrane. It is found in the cytoplasm. It catalyses the reaction ATP + H2O + cellular proteinSide 1 = ADP + phosphate + cellular proteinSide 2.. Part of the Sec protein translocase complex. Interacts with the SecYEG preprotein conducting channel. Has a central role in coupling the hydrolysis of ATP to the transfer of proteins into and across the cell membrane, serving as an ATP-driven molecular motor driving the stepwise translocation of polypeptide chains across the membrane. The sequence is that of Protein translocase subunit SecA 1 from Geobacillus kaustophilus (strain HTA426).